Here is a 367-residue protein sequence, read N- to C-terminus: MAVANLTTEQAILTEVRKQNRNRRALRLWLGFVLLALFCLVLVGGATRLTNSGLSITEWKPIHGVIPPLSAAEWDEEFRLYQRIPEFQQLNSAMTVDEFKGIFWWEWAHRLIARGIGVIFALPLIFFWLTGRIEKRLRWPLVGILALGGLQGFIGWWMVSSGLSVRTDVSQYRLATHLVMACLIFAGCMWIMRGLSPHSNDPAPARSSRGFAAAIAIFALFQIYLGALVAGLDAGFSYNTWPLMDGAVIPSDLLIQQPFWINAFENPKTVQFIHRIGAYTLFALTLINMVIALRAAPWTTHARRAVVLFSLVTLQAAIGIATLLMQVPLHWGLLHQAGALVVFGFAVANWRGFYGEYPHATAIAERD.

5 helical membrane-spanning segments follow: residues 25-45 (ALRLWLGFVLLALFCLVLVGG), 111-131 (LIARGIGVIFALPLIFFWLTG), 139-159 (WPLVGILALGGLQGFIGWWMV), 174-194 (LATHLVMACLIFAGCMWIMRG), and 210-230 (GFAAAIAIFALFQIYLGALVA). Residue His274 coordinates heme. Helical transmembrane passes span 276-296 (IGAYTLFALTLINMVIALRAA), 305-325 (AVVLFSLVTLQAAIGIATLLM), and 327-347 (VPLHWGLLHQAGALVVFGFAV). His335 contributes to the heme binding site.

Belongs to the COX15/CtaA family. Type 2 subfamily. Interacts with CtaB. It depends on heme b as a cofactor.

Its subcellular location is the cell membrane. The catalysed reaction is Fe(II)-heme o + 2 A + H2O = Fe(II)-heme a + 2 AH2. It participates in porphyrin-containing compound metabolism; heme A biosynthesis; heme A from heme O: step 1/1. Functionally, catalyzes the conversion of heme O to heme A by two successive hydroxylations of the methyl group at C8. The first hydroxylation forms heme I, the second hydroxylation results in an unstable dihydroxymethyl group, which spontaneously dehydrates, resulting in the formyl group of heme A. The protein is Heme A synthase of Rhizobium etli (strain CIAT 652).